The following is a 1065-amino-acid chain: Bifunctional cytochrome P450/NADPH--P450 reductase (1065 aa).

The tract at residues 1-479 is cytochrome P450; that stretch reads MEKKVSAIPQ…EDKLKNDEIK (479 aa). Cysteine 405 contacts heme. Residues 480-1065 form an NADPH--P450 reductase region; sequence QHVQKTPSII…RYGKDVWAGI (586 aa). Positions 496 to 635 constitute a Flavodoxin-like domain; it reads LLVLYGSDTG…QLEQWKQNMW (140 aa). FMN contacts are provided by residues 502–507, 549–552, 583–585, and 591–593; these read SDTGVA, SYNG, CGD, and TYQ. The region spanning 674 to 907 is the FAD-binding FR-type domain; that stretch reads YEAVYASILE…RTPQSNFELP (234 aa).

It in the N-terminal section; belongs to the cytochrome P450 family. It depends on heme as a cofactor. The cofactor is FAD. Requires FMN as cofactor.

It catalyses the reaction 2 oxidized [cytochrome P450] + NADPH = 2 reduced [cytochrome P450] + NADP(+) + H(+). The enzyme catalyses an organic molecule + reduced [NADPH--hemoprotein reductase] + O2 = an alcohol + oxidized [NADPH--hemoprotein reductase] + H2O + H(+). Its function is as follows. Functions as a fatty acid monooxygenase. Catalyzes hydroxylation of fatty acids at omega-1, omega-2 and omega-3 positions, yielding primarily omega-1 and omega-2 hydroxylated products. Metabolizes unsaturated and saturated fatty acids as well as N-acylamino acids. Has a preference for long-chain unsaturated fatty acids over saturated fatty acids. Shows activity toward saturated fatty acids with a chain length of 9-18 carbons with preference for longer fatty acids. Also displays a NADPH-dependent reductase activity in the C-terminal domain, which allows electron transfer from NADPH to the heme iron of the cytochrome P450 N-terminal domain. This chain is Bifunctional cytochrome P450/NADPH--P450 reductase, found in Bacillus cereus (strain ATCC 14579 / DSM 31 / CCUG 7414 / JCM 2152 / NBRC 15305 / NCIMB 9373 / NCTC 2599 / NRRL B-3711).